The sequence spans 117 residues: Ig heavy chain V region 108A (117 aa).

Residues 1-19 (MGWSWIFLFLLSGTAGVHS) form the signal peptide. Residues 20 to 117 (EVQLQQSGPE…EDSAVYYCAR (98 aa)) enclose the Ig-like domain.

The protein is Ig heavy chain V region 108A (Igh-VJ558) of Mus musculus (Mouse).